Here is a 100-residue protein sequence, read N- to C-terminus: NADH-quinone oxidoreductase subunit K (100 aa).

The next 3 membrane-spanning stretches (helical) occupy residues 4-24 (ITYY…GVLV), 29-49 (LVVF…FVAF), and 63-83 (FFVI…VIAV).

This sequence belongs to the complex I subunit 4L family. In terms of assembly, NDH-1 is composed of 14 different subunits. Subunits NuoA, H, J, K, L, M, N constitute the membrane sector of the complex.

The protein localises to the cell inner membrane. It catalyses the reaction a quinone + NADH + 5 H(+)(in) = a quinol + NAD(+) + 4 H(+)(out). NDH-1 shuttles electrons from NADH, via FMN and iron-sulfur (Fe-S) centers, to quinones in the respiratory chain. The immediate electron acceptor for the enzyme in this species is believed to be ubiquinone. Couples the redox reaction to proton translocation (for every two electrons transferred, four hydrogen ions are translocated across the cytoplasmic membrane), and thus conserves the redox energy in a proton gradient. The polypeptide is NADH-quinone oxidoreductase subunit K (Myxococcus xanthus (strain DK1622)).